We begin with the raw amino-acid sequence, 151 residues long: Ubiquitin-conjugating enzyme E2 2 (151 aa).

The 147-residue stretch at 4-150 folds into the UBC core domain; sequence AARRRLMRDF…VRETVEKSWE (147 aa). The active-site Glycyl thioester intermediate is the Cys88.

This sequence belongs to the ubiquitin-conjugating enzyme family.

The protein localises to the cytoplasm. Its subcellular location is the nucleus. It catalyses the reaction S-ubiquitinyl-[E1 ubiquitin-activating enzyme]-L-cysteine + [E2 ubiquitin-conjugating enzyme]-L-cysteine = [E1 ubiquitin-activating enzyme]-L-cysteine + S-ubiquitinyl-[E2 ubiquitin-conjugating enzyme]-L-cysteine.. It functions in the pathway protein modification; protein ubiquitination. In terms of biological role, catalyzes the covalent attachment of ubiquitin to other proteins. Plays a role in transcription regulation by catalyzing the monoubiquitination of histone H2B to form H2BK123ub1. H2BK123ub1 gives a specific tag for epigenetic transcriptional activation and is also a prerequisite for H3K4me and H3K79me formation. Also involved in postreplication repair of UV-damaged DNA, in N-end rule-dependent protein degradation and in sporulation. The sequence is that of Ubiquitin-conjugating enzyme E2 2 (UBC2) from Fusarium solani (Filamentous fungus).